A 524-amino-acid chain; its full sequence is Glutamyl-tRNA(Gln) amidotransferase subunit A, mitochondrial (524 aa).

Catalysis depends on charge relay system residues Lys76 and Ser171. Ser195 functions as the Acyl-ester intermediate in the catalytic mechanism.

Belongs to the amidase family. GatA subfamily. As to quaternary structure, subunit of the heterotrimeric GatCAB amidotransferase (AdT) complex, composed of A (qrsl1), B (gatb) and C (gatc) subunits.

It localises to the mitochondrion. It catalyses the reaction L-glutamyl-tRNA(Gln) + L-glutamine + ATP + H2O = L-glutaminyl-tRNA(Gln) + L-glutamate + ADP + phosphate + H(+). Functionally, allows the formation of correctly charged Gln-tRNA(Gln) through the transamidation of misacylated Glu-tRNA(Gln) in the mitochondria. The reaction takes place in the presence of glutamine and ATP through an activated gamma-phospho-Glu-tRNA(Gln). The protein is Glutamyl-tRNA(Gln) amidotransferase subunit A, mitochondrial (qrsl1) of Xenopus tropicalis (Western clawed frog).